The primary structure comprises 236 residues: Small ribosomal subunit protein uS2c (236 aa).

Belongs to the universal ribosomal protein uS2 family.

It is found in the plastid. The protein resides in the chloroplast. This is Small ribosomal subunit protein uS2c (rps2) from Coffea arabica (Arabian coffee).